The primary structure comprises 878 residues: Leucine--tRNA ligase (878 aa).

The 'HIGH' region motif lies at 43–53 (PYPSGRIHMGH). Residues 630–634 (KMSKS) carry the 'KMSKS' region motif. K633 provides a ligand contact to ATP.

Belongs to the class-I aminoacyl-tRNA synthetase family.

The protein localises to the cytoplasm. The enzyme catalyses tRNA(Leu) + L-leucine + ATP = L-leucyl-tRNA(Leu) + AMP + diphosphate. This Rhodopseudomonas palustris (strain BisB5) protein is Leucine--tRNA ligase.